The chain runs to 310 residues: Tagatose-6-phosphate kinase (310 aa).

The protein belongs to the carbohydrate kinase PfkB family. LacC subfamily.

It carries out the reaction D-tagatofuranose 6-phosphate + ATP = D-tagatofuranose 1,6-bisphosphate + ADP + H(+). It participates in carbohydrate metabolism; D-tagatose 6-phosphate degradation; D-glyceraldehyde 3-phosphate and glycerone phosphate from D-tagatose 6-phosphate: step 1/2. The polypeptide is Tagatose-6-phosphate kinase (Staphylococcus epidermidis (strain ATCC 35984 / DSM 28319 / BCRC 17069 / CCUG 31568 / BM 3577 / RP62A)).